A 236-amino-acid polypeptide reads, in one-letter code: Rab-like protein 3 (236 aa).

The segment at 1 to 236 (MASLDRVKVL…AGTLKSLHYD (236 aa)) is small GTPase-like. Residues 16-21 (GVGKSS), 148-150 (KLD), and 179-180 (DC) each bind GTP.

The protein belongs to the small GTPase superfamily. Rab family. Homodimer. Interacts with GPR89; the interaction stabilizes GPR89. Interacts with RAP1GDS1.

Functionally, required for KRAS signaling regulation and modulation of cell proliferation. Regulator of KRAS prenylation, and probably prenylation of other small GTPases. Required for lymphocyte development and function. Not required for myeloid cell development. The polypeptide is Rab-like protein 3 (RABL3) (Homo sapiens (Human)).